The sequence spans 74 residues: UPF0352 protein PM1884 (74 aa).

Belongs to the UPF0352 family.

The sequence is that of UPF0352 protein PM1884 from Pasteurella multocida (strain Pm70).